We begin with the raw amino-acid sequence, 492 residues long: Probable ATP-citrate synthase subunit 2 (492 aa).

S24 bears the Phosphoserine mark.

It in the N-terminal section; belongs to the succinate/malate CoA ligase beta subunit family. In the C-terminal section; belongs to the succinate/malate CoA ligase alpha subunit family. As to quaternary structure, composed of two subunits.

Its subcellular location is the cytoplasm. The protein resides in the nucleus. The enzyme catalyses oxaloacetate + acetyl-CoA + ADP + phosphate = citrate + ATP + CoA. Its function is as follows. ATP citrate-lyase is the primary enzyme responsible for the synthesis of cytosolic acetyl-CoA. Has a central role in de novo lipid synthesis. The sequence is that of Probable ATP-citrate synthase subunit 2 from Schizosaccharomyces pombe (strain 972 / ATCC 24843) (Fission yeast).